Here is a 153-residue protein sequence, read N- to C-terminus: Cyanate hydratase (153 aa).

Catalysis depends on residues Arg-88, Glu-91, and Ser-114.

The protein belongs to the cyanase family.

It catalyses the reaction cyanate + hydrogencarbonate + 3 H(+) = NH4(+) + 2 CO2. Catalyzes the reaction of cyanate with bicarbonate to produce ammonia and carbon dioxide. The polypeptide is Cyanate hydratase (Mycolicibacterium vanbaalenii (strain DSM 7251 / JCM 13017 / BCRC 16820 / KCTC 9966 / NRRL B-24157 / PYR-1) (Mycobacterium vanbaalenii)).